The chain runs to 347 residues: Probable replication factor C subunit 5 (347 aa).

Residue 64–71 participates in ATP binding; that stretch reads GPPGTGKT.

The protein belongs to the activator 1 small subunits family. Heteropentamer of various rfc subunits that forms a complex (RFC) with PCNA in the presence of ATP.

The protein resides in the nucleus. Its function is as follows. The elongation of primed DNA templates by DNA polymerase delta and epsilon requires the action of the accessory proteins PCNA and activator 1. The polypeptide is Probable replication factor C subunit 5 (rfc5) (Dictyostelium discoideum (Social amoeba)).